Here is a 136-residue protein sequence, read N- to C-terminus: ATP synthase epsilon chain (136 aa).

The protein belongs to the ATPase epsilon chain family. In terms of assembly, F-type ATPases have 2 components, CF(1) - the catalytic core - and CF(0) - the membrane proton channel. CF(1) has five subunits: alpha(3), beta(3), gamma(1), delta(1), epsilon(1). CF(0) has three main subunits: a, b and c.

It localises to the cellular thylakoid membrane. Produces ATP from ADP in the presence of a proton gradient across the membrane. The polypeptide is ATP synthase epsilon chain (Parasynechococcus marenigrum (strain WH8102)).